The sequence spans 514 residues: Peptide chain release factor 3 (514 aa).

The region spanning 8 to 268 is the tr-type G domain; that stretch reads KKRRTFAIIS…TFLEFAPEPH (261 aa). GTP-binding positions include 17–24, 85–89, and 139–142; these read SHPDAGKT, DTPGH, and NKLD.

The protein belongs to the TRAFAC class translation factor GTPase superfamily. Classic translation factor GTPase family. PrfC subfamily.

The protein localises to the cytoplasm. Increases the formation of ribosomal termination complexes and stimulates activities of RF-1 and RF-2. It binds guanine nucleotides and has strong preference for UGA stop codons. It may interact directly with the ribosome. The stimulation of RF-1 and RF-2 is significantly reduced by GTP and GDP, but not by GMP. The protein is Peptide chain release factor 3 of Streptococcus agalactiae serotype Ia (strain ATCC 27591 / A909 / CDC SS700).